Consider the following 201-residue polypeptide: Rac-like GTP-binding protein ARAC2 (201 aa).

Gly-13–Thr-20 contacts GTP. The Effector region motif lies at Tyr-35–Phe-43. Residues Asp-60–Gln-64 and Thr-118–Asp-121 each bind GTP. Position 198 is a cysteine methyl ester (Cys-198). Residue Cys-198 is the site of S-geranylgeranyl cysteine attachment. A propeptide spans Phe-199–Leu-201 (removed in mature form).

The protein belongs to the small GTPase superfamily. Rho family. Expressed exclusively in the root, hypocotyl and stem.

Its subcellular location is the cytoplasm. The protein localises to the membrane. In terms of biological role, inactive GDP-bound Rho GTPases reside in the cytosol, are found in a complex with Rho GDP-dissociation inhibitors (Rho GDIs), and are released from the GDI protein in order to translocate to membranes upon activation. The chain is Rac-like GTP-binding protein ARAC2 (ARAC2) from Arabidopsis thaliana (Mouse-ear cress).